Reading from the N-terminus, the 351-residue chain is Uroporphyrinogen decarboxylase (351 aa).

Residues 25–29, D74, Y151, S206, and H325 each bind substrate; that span reads RQAGR.

This sequence belongs to the uroporphyrinogen decarboxylase family. As to quaternary structure, homodimer.

The protein resides in the cytoplasm. The catalysed reaction is uroporphyrinogen III + 4 H(+) = coproporphyrinogen III + 4 CO2. It participates in porphyrin-containing compound metabolism; protoporphyrin-IX biosynthesis; coproporphyrinogen-III from 5-aminolevulinate: step 4/4. Functionally, catalyzes the decarboxylation of four acetate groups of uroporphyrinogen-III to yield coproporphyrinogen-III. The protein is Uroporphyrinogen decarboxylase of Chlorobium phaeovibrioides (strain DSM 265 / 1930) (Prosthecochloris vibrioformis (strain DSM 265)).